Reading from the N-terminus, the 307-residue chain is 4-hydroxybenzoate geranyltransferase 1 (307 aa).

8 helical membrane passes run 38 to 58, 62 to 82, 120 to 140, 154 to 174, 179 to 199, 230 to 250, 252 to 272, and 286 to 306; these read PIGS…AADL, PKML…GCTI, LFIG…LAIV, ITYW…LLGS, GSVV…WTLV, MWIS…GLIL, IGLP…WQIF, and FVSN…GRLF.

It belongs to the UbiA prenyltransferase family. Mg(2+) is required as a cofactor. Expressed only in roots.

It localises to the endoplasmic reticulum membrane. The enzyme catalyses 4-hydroxybenzoate + (2E)-geranyl diphosphate = 3-geranyl-4-hydroxybenzoate + diphosphate. Functionally, prenyltransferase involved in the biosynthesis of shikonin, a naphthoquinone secondary metabolite. Could accept only geranyl diphosphate and not dimethylallyl diphosphate, farnesyl diphosphate, or geranylgeranyl diphosphate as substrate. The sequence is that of 4-hydroxybenzoate geranyltransferase 1 (PGT-1) from Lithospermum erythrorhizon (Purple gromwell).